The chain runs to 218 residues: Small ribosomal subunit protein uS5 (218 aa).

Residues 66 to 129 (LKQELLNVNL…REAKLNLVPV (64 aa)) enclose the S5 DRBM domain.

Belongs to the universal ribosomal protein uS5 family. In terms of assembly, part of the 30S ribosomal subunit. Contacts protein S4.

Its function is as follows. With S4 and S12 plays an important role in translational accuracy. In Pyrobaculum aerophilum (strain ATCC 51768 / DSM 7523 / JCM 9630 / CIP 104966 / NBRC 100827 / IM2), this protein is Small ribosomal subunit protein uS5.